The primary structure comprises 154 residues: uncharacterized protein (154 aa).

It belongs to the MG032/MG096/MG288 family.

This is an uncharacterized protein from Mycoplasma pneumoniae (strain ATCC 29342 / M129 / Subtype 1) (Mycoplasmoides pneumoniae).